A 212-amino-acid polypeptide reads, in one-letter code: Thymidylate kinase (212 aa).

An ATP-binding site is contributed by 10–17; the sequence is GLEGAGKT.

Belongs to the thymidylate kinase family.

It catalyses the reaction dTMP + ATP = dTDP + ADP. Phosphorylation of dTMP to form dTDP in both de novo and salvage pathways of dTTP synthesis. The protein is Thymidylate kinase of Baumannia cicadellinicola subsp. Homalodisca coagulata.